The chain runs to 1430 residues: Transport and Golgi organization protein 1 (1430 aa).

Residues 1 to 34 (MRLTNEKATMQPQLSDLALVLGLLICCLPTLTWA) form the signal peptide. The Extracellular portion of the chain corresponds to 35 to 796 (ATLSDKRLCA…ADKLVDHSQL (762 aa)). In terms of domain architecture, SH3 spans 50–112 (QIISMGIAKI…NKDFIMEKKI (63 aa)). 5 disordered regions span residues 253–272 (QEEP…PPLP), 284–303 (DFDY…SQDN), 318–362 (ESIE…SLPT), 445–524 (SDAE…DQQK), and 568–673 (EEAE…TDNH). Positions 284–296 (DFDYGDDETDDDS) are enriched in acidic residues. Composition is skewed to basic and acidic residues over residues 331–357 (KKTD…KQED), 497–524 (LQEE…DQQK), and 568–588 (EEAE…RSSE). Positions 494-620 (YKQLQEEQEK…QSNEIVDNNN (127 aa)) form a coiled coil. The segment covering 594-621 (LSVQEANMQQLNDSVDSQSNEIVDNNNR) has biased composition (polar residues). Low complexity predominate over residues 640 to 651 (HPSTASHTTPTP). Residues 797–817 (LLCVVIAAISSLFFMFAYYCF) form a helical membrane-spanning segment. At 818 to 1430 (CNSSQEGALL…SATSRPYSEV (613 aa)) the chain is on the cytoplasmic side. A phosphoserine mark is found at serine 865 and serine 868. Positions 869–1245 (NDMVADLKKQ…SLRRKLTTMA (377 aa)) form a coiled coil. Low complexity predominate over residues 1105 to 1114 (SQLQQSSQDV). 2 disordered regions span residues 1105 to 1126 (SQLQ…QSER) and 1312 to 1430 (LPPT…YSEV). A compositionally biased stretch (basic and acidic residues) spans 1115 to 1126 (EQLKQDFNQSER). Positions 1321–1334 (RPPPLGRMRSPPPS) are enriched in pro residues. Positions 1336–1346 (RGDRDRERYSD) are enriched in basic and acidic residues. Serine 1345 and serine 1348 each carry phosphoserine. The segment covering 1348–1361 (SDYDDYDDDEEDDR) has biased composition (acidic residues). Positions 1364–1380 (DRRRRHSGSWGRRHRGS) are enriched in basic residues. The segment covering 1387 to 1402 (TYRSLSPSDSRYNYND) has biased composition (polar residues). Phosphoserine occurs at positions 1390 and 1392. Pro residues predominate over residues 1408-1417 (SPPPSPPPVP). Polar residues predominate over residues 1420 to 1430 (RSATSRPYSEV).

The protein belongs to the MIA/OTOR family. Tango1 subfamily.

Its subcellular location is the golgi apparatus membrane. The protein localises to the golgi apparatus. It localises to the trans-Golgi network. Functionally, required for protein secretion. May participate in cargo loading by binding to COPII coat subunits and guiding SH3-bound proteins into a growing carrier. At basal transitional ER sites in follicle epithelial cells, mediates the exit of basal membrane protein such as vkg, LanB1 and Trol, from the endoplasmic reticulum (ER) to basal Golgi clusters. This Drosophila melanogaster (Fruit fly) protein is Transport and Golgi organization protein 1.